The chain runs to 315 residues: Methionyl-tRNA formyltransferase (315 aa).

Position 107-110 (107-110 (SLLP)) interacts with (6S)-5,6,7,8-tetrahydrofolate.

Belongs to the Fmt family.

It catalyses the reaction L-methionyl-tRNA(fMet) + (6R)-10-formyltetrahydrofolate = N-formyl-L-methionyl-tRNA(fMet) + (6S)-5,6,7,8-tetrahydrofolate + H(+). Its function is as follows. Attaches a formyl group to the free amino group of methionyl-tRNA(fMet). The formyl group appears to play a dual role in the initiator identity of N-formylmethionyl-tRNA by promoting its recognition by IF2 and preventing the misappropriation of this tRNA by the elongation apparatus. The polypeptide is Methionyl-tRNA formyltransferase (Borrelia garinii subsp. bavariensis (strain ATCC BAA-2496 / DSM 23469 / PBi) (Borreliella bavariensis)).